The following is a 181-amino-acid chain: Mitochondrial inner membrane protein Mpv17 (181 aa).

The next 4 membrane-spanning stretches (helical) occupy residues 20–38 (VIVSGAVCGAGDAFTQYLT), 48–70 (TARFTCLAAVFIAPPLNVWFRVL), 91–113 (FMFSPFFNAIILVNLRLLEGFSF), and 140–162 (LINFYFVPLNYRVILIQVVAFFW).

Belongs to the peroxisomal membrane protein PXMP2/4 family.

The protein localises to the mitochondrion inner membrane. Functionally, involved in mitochondria homeostasis. In Caenorhabditis briggsae, this protein is Mitochondrial inner membrane protein Mpv17.